A 295-amino-acid polypeptide reads, in one-letter code: Glucose-1-phosphate thymidylyltransferase (295 aa).

Residues Asp-111 and Asp-226 each contribute to the Mg(2+) site.

Belongs to the glucose-1-phosphate thymidylyltransferase family. Homotetramer. Mg(2+) is required as a cofactor.

It catalyses the reaction dTTP + alpha-D-glucose 1-phosphate + H(+) = dTDP-alpha-D-glucose + diphosphate. Its pathway is carbohydrate biosynthesis; dTDP-L-rhamnose biosynthesis. The protein operates within bacterial outer membrane biogenesis; LPS O-antigen biosynthesis. In terms of biological role, catalyzes the formation of dTDP-glucose, from dTTP and glucose 1-phosphate, as well as its pyrophosphorolysis. This Xanthomonas campestris pv. campestris (strain B100) protein is Glucose-1-phosphate thymidylyltransferase (rmlA).